The following is a 430-amino-acid chain: Alpha-1,6-mannosyl-glycoprotein 2-beta-N-acetylglucosaminyltransferase (430 aa).

Residues 1–12 (MANLWKKQRLRD) lie on the Cytoplasmic side of the membrane. Residues 13–35 (TGLCRLGILFAVTLSIVLMLVSV) form a helical; Signal-anchor for type II membrane protein membrane-spanning segment. Residues 36-430 (PRTALNGSSI…YRYSSSSASP (395 aa)) lie on the Lumenal side of the membrane. N-linked (GlcNAc...) asparagine glycans are attached at residues N41 and N61. Substrate-binding positions include 104–108 (YVHNR) and D135. A disulfide bridge connects residues C177 and C188. 205–209 (SLKHH) serves as a coordination point for substrate. Residue D237 participates in Mn(2+) binding. The cysteines at positions 259 and 262 are disulfide-linked. N295 carries N-linked (GlcNAc...) asparagine glycosylation. C310 and C414 are joined by a disulfide. H345 contacts Mn(2+).

Belongs to the glycosyltransferase 16 (GT16) protein family. Requires Mn(2+) as cofactor.

The protein localises to the golgi apparatus membrane. It catalyses the reaction an N(4)-{beta-D-GlcNAc-(1-&gt;2)-alpha-D-Man-(1-&gt;3)-[alpha-D-Man-(1-&gt;6)]-beta-D-Man-(1-&gt;4)-beta-D-GlcNAc-(1-&gt;4)-beta-D-GlcNAc}-L-asparaginyl-[protein] + UDP-N-acetyl-alpha-D-glucosamine = N(4)-{beta-D-GlcNAc-(1-&gt;2)-alpha-D-Man-(1-&gt;3)-[beta-D-GlcNAc-(1-&gt;2)-alpha-D-Man-(1-&gt;6)]-beta-D-Man-(1-&gt;4)-beta-D-GlcNAc-(1-&gt;4)-beta-D-GlcNAc}-L-asparaginyl-[protein] + UDP + H(+). It functions in the pathway protein modification; protein glycosylation. Catalyzes an essential step in the conversion of oligo-mannose and hybrid to complex N-glycans. The polypeptide is Alpha-1,6-mannosyl-glycoprotein 2-beta-N-acetylglucosaminyltransferase (Arabidopsis thaliana (Mouse-ear cress)).